The following is a 179-amino-acid chain: Large ribosomal subunit protein uL5 (179 aa).

This sequence belongs to the universal ribosomal protein uL5 family. As to quaternary structure, part of the 50S ribosomal subunit; part of the 5S rRNA/L5/L18/L25 subcomplex. Contacts the 5S rRNA and the P site tRNA. Forms a bridge to the 30S subunit in the 70S ribosome.

Its function is as follows. This is one of the proteins that bind and probably mediate the attachment of the 5S RNA into the large ribosomal subunit, where it forms part of the central protuberance. In the 70S ribosome it contacts protein S13 of the 30S subunit (bridge B1b), connecting the 2 subunits; this bridge is implicated in subunit movement. Contacts the P site tRNA; the 5S rRNA and some of its associated proteins might help stabilize positioning of ribosome-bound tRNAs. In Vibrio campbellii (strain ATCC BAA-1116), this protein is Large ribosomal subunit protein uL5.